The following is a 151-amino-acid chain: uncharacterized protein (151 aa).

3 helical membrane-spanning segments follow: residues 14–34, 45–65, and 91–111; these read GAALLDYIIVSVPLLLIYWLI, ISLVVLLYSILLPMFWRGYLI, and VIVAGLVYCITFGLGLIASLI.

It is found in the cell membrane. This is an uncharacterized protein from Bacillus subtilis (strain 168).